The sequence spans 210 residues: Ribosomal RNA large subunit methyltransferase E (210 aa).

S-adenosyl-L-methionine is bound by residues Gly60, Trp62, Asp85, Asp101, and Asp126. Lys166 acts as the Proton acceptor in catalysis. Basic and acidic residues predominate over residues 191-200 (KPKASRDKSS). A disordered region spans residues 191–210 (KPKASRDKSSETFLVARDLK).

This sequence belongs to the class I-like SAM-binding methyltransferase superfamily. RNA methyltransferase RlmE family.

It localises to the cytoplasm. The catalysed reaction is uridine(2552) in 23S rRNA + S-adenosyl-L-methionine = 2'-O-methyluridine(2552) in 23S rRNA + S-adenosyl-L-homocysteine + H(+). Specifically methylates the uridine in position 2552 of 23S rRNA at the 2'-O position of the ribose in the fully assembled 50S ribosomal subunit. The protein is Ribosomal RNA large subunit methyltransferase E of Bordetella bronchiseptica (strain ATCC BAA-588 / NCTC 13252 / RB50) (Alcaligenes bronchisepticus).